The primary structure comprises 305 residues: Translation initiation factor eIF2B subunit alpha (305 aa).

At serine 2 the chain carries N-acetylserine. Threonine 291 carries the post-translational modification Phosphothreonine.

Belongs to the eIF-2B alpha/beta/delta subunits family. In terms of assembly, component of the translation initiation factor 2B (eIF2B) complex which is a heterodecamer of two sets of five different subunits: alpha, beta, gamma, delta and epsilon. Subunits alpha, beta and delta comprise a regulatory subcomplex and subunits epsilon and gamma comprise a catalytic subcomplex. Within the complex, the hexameric regulatory complex resides at the center, with the two heterodimeric catalytic subcomplexes bound on opposite sides.

It localises to the cytoplasm. Its subcellular location is the cytosol. In terms of biological role, acts as a component of the translation initiation factor 2B (eIF2B) complex, which catalyzes the exchange of GDP for GTP on the eukaryotic initiation factor 2 (eIF2) complex gamma subunit. Its guanine nucleotide exchange factor activity is repressed when bound to eIF2 complex phosphorylated on the alpha subunit, thereby limiting the amount of methionyl-initiator methionine tRNA available to the ribosome and consequently global translation is repressed. It activates the translation of GCN4 in response to low amino acid, carbon, or purine availability, by suppressing the inhibitory effects of multiple uORFs present in the leader of GCN4 mRNA. It may promote either repression or activation of GCN4 expression depending on amino acid availability. Modulation of GCN3 regulatory function in response to amino acid availability occurs post-translationally. This Saccharomyces cerevisiae (strain ATCC 204508 / S288c) (Baker's yeast) protein is Translation initiation factor eIF2B subunit alpha.